The chain runs to 89 residues: Inner kinetochore subunit mhf2 (89 aa).

Belongs to the CENP-X/MHF2 family. In terms of assembly, the MHF histone-fold complex is a heterotetramer of 2 mhf1-mhf2 heterodimers. Component of the inner kinetochore constitutive centromere-associated network (CCAN) (also known as central kinetochore Sim4 complex in fission yeast), which is composed of at least cnl2, cnp3, cnp20, fta1, fta2, fta3, fta4, fta6, fta7, mal2, mhf1, mhf2, mis6, mis15, mis17, sim4 and wip1.

Its subcellular location is the nucleus. The protein resides in the cytoplasm. In terms of biological role, component of a FANCM-MHF complex that promotes gene conversion at blocked replication forks, probably by reversal of the stalled fork. FANCM-MHF promotes non-crossover recombination. The sequence is that of Inner kinetochore subunit mhf2 from Schizosaccharomyces pombe (strain 972 / ATCC 24843) (Fission yeast).